Reading from the N-terminus, the 229-residue chain is Synaptogyrin-3 (229 aa).

Met-1 carries the N-acetylmethionine modification. In terms of domain architecture, MARVEL spans 20–172; it reads FARRPQTLLR…LTVKALQRFR (153 aa). Transmembrane regions (helical) follow at residues 30–50, 70–90, 105–125, and 148–168; these read VASW…GYVN, FGVA…LLDV, VLLD…GFCF, and AAIA…VKAL. Polar residues predominate over residues 209-219; that stretch reads QSPPFTETLDT. The segment at 209 to 229 is disordered; the sequence is QSPPFTETLDTSPKGYQVPAY.

The protein belongs to the synaptogyrin family. Interacts (via N-terminus) with SLC6A3 (via N-terminus). May interact with VMAT2. As to expression, expressed in brain and placenta.

It localises to the cytoplasmic vesicle. The protein resides in the secretory vesicle. The protein localises to the synaptic vesicle membrane. Its subcellular location is the synapse. May play a role in regulated exocytosis. May indirectly regulate the activity of the plasma membrane dopamine transporter SLC6A3 and thereby regulate dopamine transport back from the synaptic cleft into the presynaptic terminal. In Homo sapiens (Human), this protein is Synaptogyrin-3.